The primary structure comprises 817 residues: TPR repeat-containing protein C19B12.01 (817 aa).

2 disordered regions span residues 276–298 and 386–413; these read DQKSLAPSEELDPILSSEDPNHP and GKSPEGVDKPENDEGLGSFLPKPQDGEN. TPR repeat units follow at residues 459–492, 521–554, 555–588, and 625–658; these read LQMWDCVVMCHCSLNRQDLAVQVIKRELENDPYD, APAQRSLGKYYYKKGDLLQAMNCFNESLKINPLS, YPTWFTYGCAALELQKYDAAMEAFSRCLSINPED, and WRIWENYMLISVDVNKWSEVIRALRRIIEIKGKD.

This is TPR repeat-containing protein C19B12.01 from Schizosaccharomyces pombe (strain 972 / ATCC 24843) (Fission yeast).